Consider the following 421-residue polypeptide: Gamma-glutamyl phosphate reductase (421 aa).

The protein belongs to the gamma-glutamyl phosphate reductase family.

It is found in the cytoplasm. It carries out the reaction L-glutamate 5-semialdehyde + phosphate + NADP(+) = L-glutamyl 5-phosphate + NADPH + H(+). Its pathway is amino-acid biosynthesis; L-proline biosynthesis; L-glutamate 5-semialdehyde from L-glutamate: step 2/2. In terms of biological role, catalyzes the NADPH-dependent reduction of L-glutamate 5-phosphate into L-glutamate 5-semialdehyde and phosphate. The product spontaneously undergoes cyclization to form 1-pyrroline-5-carboxylate. The protein is Gamma-glutamyl phosphate reductase of Pseudomonas aeruginosa (strain ATCC 15692 / DSM 22644 / CIP 104116 / JCM 14847 / LMG 12228 / 1C / PRS 101 / PAO1).